The following is a 251-amino-acid chain: Hydroxyacylglutathione hydrolase (251 aa).

Zn(2+) is bound by residues His53, His55, Asp57, His58, His110, Asp127, and His165.

It belongs to the metallo-beta-lactamase superfamily. Glyoxalase II family. Monomer. It depends on Zn(2+) as a cofactor.

It catalyses the reaction an S-(2-hydroxyacyl)glutathione + H2O = a 2-hydroxy carboxylate + glutathione + H(+). It functions in the pathway secondary metabolite metabolism; methylglyoxal degradation; (R)-lactate from methylglyoxal: step 2/2. Thiolesterase that catalyzes the hydrolysis of S-D-lactoyl-glutathione to form glutathione and D-lactic acid. The polypeptide is Hydroxyacylglutathione hydrolase (Klebsiella pneumoniae subsp. pneumoniae (strain ATCC 700721 / MGH 78578)).